Consider the following 441-residue polypeptide: Homoserine dehydrogenase (441 aa).

N17 and V18 together coordinate NADP(+). 2 residues coordinate NAD(+): V18 and G47. Residue V18 coordinates NADPH. Residues R49, R50, and K107 each coordinate NADP(+). Residue R49 participates in NADPH binding. An NADPH-binding site is contributed by K107. Na(+) is bound by residues E131, V134, G136, and I138. NADP(+)-binding residues include G189 and E192. Residues E192 and D203 each contribute to the L-homoserine site. Catalysis depends on K207, which acts as the Proton donor. G309 lines the NADP(+) pocket. G309 contributes to the NAD(+) binding site. G309 is an NADPH binding site. Positions 356–435 (YVSMNVADKP…VVQGVTSVLR (80 aa)) constitute an ACT domain.

The protein belongs to the homoserine dehydrogenase family. Requires a metal cation as cofactor.

The enzyme catalyses L-homoserine + NADP(+) = L-aspartate 4-semialdehyde + NADPH + H(+). It catalyses the reaction L-homoserine + NAD(+) = L-aspartate 4-semialdehyde + NADH + H(+). The protein operates within amino-acid biosynthesis; L-methionine biosynthesis via de novo pathway; L-homoserine from L-aspartate: step 3/3. Its pathway is amino-acid biosynthesis; L-threonine biosynthesis; L-threonine from L-aspartate: step 3/5. Functionally, catalyzes the conversion of L-aspartate-beta-semialdehyde (L-Asa) to L-homoserine (L-Hse), the third step in the biosynthesis of threonine and methionine from aspartate. The polypeptide is Homoserine dehydrogenase (hom) (Mycobacterium leprae (strain TN)).